Here is a 178-residue protein sequence, read N- to C-terminus: Fucolectin-1 (178 aa).

A signal peptide spans 1–20; the sequence is MKVKTIMLLFQILAISTIKS. The interval 29-178 is F5/8 type C-like; sequence QENVAVRGKA…VEVNALLPVN (150 aa). Ca(2+)-binding residues include D59, N61, and S70. 3 cysteine pairs are disulfide-bonded: C71–C167, C103–C104, and C129–C145. Alpha-L-fucose contacts are provided by H73 and R100. Residues 100–102 carry the Cell attachment site motif; it reads RGD. Position 107 (R107) interacts with alpha-L-fucose. Residues C167 and E168 each contribute to the Ca(2+) site.

It belongs to the fucolectin family. As to quaternary structure, homotrimer. In terms of tissue distribution, parenchymal hepatocytes.

The protein resides in the secreted. The protein localises to the extracellular space. Functionally, acts as a defensive agent. Recognizes blood group fucosylated oligosaccharides including A, B, H and Lewis B-type antigens. Does not recognize Lewis A antigen and has low affinity for monovalent haptens. The polypeptide is Fucolectin-1 (Anguilla japonica (Japanese eel)).